The primary structure comprises 316 residues: Porphobilinogen deaminase (316 aa).

Cys245 carries the S-(dipyrrolylmethanemethyl)cysteine modification.

This sequence belongs to the HMBS family. As to quaternary structure, monomer. The cofactor is dipyrromethane.

The enzyme catalyses 4 porphobilinogen + H2O = hydroxymethylbilane + 4 NH4(+). It functions in the pathway porphyrin-containing compound metabolism; protoporphyrin-IX biosynthesis; coproporphyrinogen-III from 5-aminolevulinate: step 2/4. Its pathway is porphyrin-containing compound metabolism; chlorophyll biosynthesis. Tetrapolymerization of the monopyrrole PBG into the hydroxymethylbilane pre-uroporphyrinogen in several discrete steps. The polypeptide is Porphobilinogen deaminase (Synechococcus sp. (strain CC9311)).